The primary structure comprises 440 residues: MPDSGPLGPHSPDHRPTPATTVPDAPASKPPDVAVTPTASEFLAALHPPVPIPSPSPPSGSASAAADTPDATTVGSALQRILRGPTGPGTAALALSVRHDPPSLPGSPAPAEPAAGRAVPGLYHHPVPEPDPARVEEVSRRIKRWAEDEVQLYPEDWEGEFDGFSVGRYMVACHPDAPTVDHLMLATRLMVAENAVDDCYCEDHGGSPVGLGGRLLLAHTAIDPFHTTAEYAPPWRESLTSDAPRRAYRSAMDYFVRAATPSQADRYRHDMARLHLGYLAEAAWAQTDHVPEVWEYLAMRQFNNFRPCPTITDTVGGYELPADLHARPDMQRVIALAGNATTIVNDLYSYTKELDSPGRHLNLPVVIAERERLSERDAYLKAVEVHNELQHAFEAAAAELAKACPLPTVLRFLKGVAAWVDGNHDWHRTNTYRYSLPDFW.

A disordered region spans residues 1–116 (MPDSGPLGPH…SPAPAEPAAG (116 aa)). Residues 17–27 (TPATTVPDAPA) are compositionally biased toward low complexity. Residues 48 to 58 (PPVPIPSPSPP) show a composition bias toward pro residues. A compositionally biased stretch (low complexity) spans 59–75 (SGSASAAADTPDATTVG). Over residues 102–111 (PSLPGSPAPA) the composition is skewed to pro residues. The Mg(2+) site is built by Asp-197, Asp-198, Glu-202, Asn-345, Ser-349, and Glu-353.

The protein belongs to the terpene synthase family. 2-methylisoborneol synthase subfamily. Mg(2+) serves as cofactor.

It carries out the reaction (E)-2-methylgeranyl diphosphate + H2O = 2-methylisoborneol + diphosphate. Catalyzes the cyclization of 2-methylgeranyl diphosphate (2-MeGPP) to 2-methylisoborneol (2-MIB), which likely involves the intermediacy of 2-methyllinalyl diphosphate. The polypeptide is 2-methylisoborneol synthase (Streptomyces ambofaciens (strain ATCC 23877 / 3486 / DSM 40053 / JCM 4204 / NBRC 12836 / NRRL B-2516)).